Here is a 101-residue protein sequence, read N- to C-terminus: Phosphoprotein OPG062 (101 aa).

The tract at residues 48-76 is disordered; the sequence is VDKPSSPASERRPSSPSRCERMNNPGKQV. Phosphoserine is present on residues S53 and S62. Positions 56–68 are enriched in basic and acidic residues; that stretch reads SERRPSSPSRCER.

Belongs to the orthopoxvirus OPG062 family. As to quaternary structure, self-associates to form high molecular-weight forms. Interacts with protein OPG157. Interacts with host RICTOR and RPTOR; these interactions disrupt the mTORC1 and mTORC2 crosstalk. Phosphorylated on two serines. While these phosphorylations do not play a role in virion assembly; they are essential for the interaction with host RICTOR and RPTOR.

The protein localises to the virion. In terms of biological role, plays an essential role in virion assembly and morphogenesis. Also plays a role in the inhibition of host immune response by dysregulating mTOR. Sequesters host RICTOR and RPTOR, thereby disrupting mTORC1 and mTORC2 crosstalk. In turn, blocks the host antiviral response in part through mTOR-dependent degradation of cGAS, the primary poxvirus sensor. The protein is Phosphoprotein OPG062 (OPG062) of Variola virus (isolate Human/India/Ind3/1967) (VARV).